We begin with the raw amino-acid sequence, 613 residues long: ATP-dependent RNA helicase DeaD (613 aa).

The short motif at 5–33 (ITFNDLGLPEFILKAVSDLGFETPSPIQQ) is the Q motif element. Residues 36-207 (IPHLLNGNDV…KRFMNDPQEV (172 aa)) form the Helicase ATP-binding domain. Position 49–56 (49–56 (AQTGSGKT)) interacts with ATP. The short motif at 155–158 (DEAD) is the DEAD box element. The Helicase C-terminal domain maps to 231 to 378 (KNEALLRFLE…EVELPNHLVL (148 aa)). Disordered stretches follow at residues 434–476 (ILPP…PQPM) and 552–613 (AVKS…RSSF). Basic and acidic residues-rich tracts occupy residues 440–469 (PMEK…ERKG) and 556–613 (DNSR…RSSF).

The protein belongs to the DEAD box helicase family. DeaD/CsdA subfamily.

It is found in the cytoplasm. It catalyses the reaction ATP + H2O = ADP + phosphate + H(+). In terms of biological role, DEAD-box RNA helicase involved in various cellular processes at low temperature, including ribosome biogenesis, mRNA degradation and translation initiation. The polypeptide is ATP-dependent RNA helicase DeaD (Haemophilus influenzae (strain ATCC 51907 / DSM 11121 / KW20 / Rd)).